The sequence spans 240 residues: NAD-dependent protein deacylase Sir2 (240 aa).

Positions 1 to 235 (MQVTVLSGAG…PTLLQRLPEL (235 aa)) constitute a Deacetylase sirtuin-type domain. 8–28 (GAGISAESGVPTFRDAETGLW) is an NAD(+) binding site. Residues tyrosine 53 and arginine 56 each contribute to the substrate site. 86–89 (QNID) is an NAD(+) binding site. Catalysis depends on histidine 104, which acts as the Proton acceptor. Zn(2+)-binding residues include cysteine 112, cysteine 115, cysteine 138, and cysteine 140. NAD(+) is bound by residues 177–179 (GTS), 203–205 (NPE), and alanine 221.

Belongs to the sirtuin family. Class III subfamily. As to quaternary structure, interacts with both Ku and LigD; may form a trimeric complex during NHEJ. It depends on Zn(2+) as a cofactor.

The protein localises to the cytoplasm. The enzyme catalyses N(6)-succinyl-L-lysyl-[protein] + NAD(+) + H2O = 2''-O-succinyl-ADP-D-ribose + nicotinamide + L-lysyl-[protein]. The catalysed reaction is N(6)-acetyl-L-lysyl-[protein] + NAD(+) + H2O = 2''-O-acetyl-ADP-D-ribose + nicotinamide + L-lysyl-[protein]. In terms of biological role, NAD-dependent lysine deacetylase and desuccinylase that specifically removes acetyl and succinyl groups on target proteins. Modulates the activities of several proteins which are inactive in their acylated form. Its function is as follows. Involved in non-homologous end joining (NHEJ) repair of blunt, 5' overhang and 3' overhang DNA double strand breaks (DSB). Overexpression increases the efficiency of NHEJ of the above DSBs 2-fold with no effect on repair fidelity. The protein is NAD-dependent protein deacylase Sir2 (sir2) of Mycolicibacterium smegmatis (strain ATCC 700084 / mc(2)155) (Mycobacterium smegmatis).